Reading from the N-terminus, the 238-residue chain is DNA repair protein RecO (238 aa).

The protein belongs to the RecO family.

Involved in DNA repair and RecF pathway recombination. The polypeptide is DNA repair protein RecO (Hahella chejuensis (strain KCTC 2396)).